A 131-amino-acid chain; its full sequence is Protein ApaG (131 aa).

An ApaG domain is found at 7-131 (PVKPYDLTVS…FLLAMPRTLH (125 aa)).

The protein is Protein ApaG of Bordetella bronchiseptica (strain ATCC BAA-588 / NCTC 13252 / RB50) (Alcaligenes bronchisepticus).